An 839-amino-acid polypeptide reads, in one-letter code: Eukaryotic translation initiation factor 3 subunit C (839 aa).

The interval Met1–Arg93 is disordered. Composition is skewed to acidic residues over residues Ser14–Leu27 and Gly34–Asp58. One can recognise a PCI domain in the interval Phe585–Pro759. A disordered region spans residues Glu783–Ala839. Residues Gln794–Gln812 are compositionally biased toward low complexity. A compositionally biased stretch (polar residues) spans Asn827–Ala839.

It belongs to the eIF-3 subunit C family. In terms of assembly, component of the eukaryotic translation initiation factor 3 (eIF-3) complex.

It localises to the cytoplasm. Component of the eukaryotic translation initiation factor 3 (eIF-3) complex, which is involved in protein synthesis of a specialized repertoire of mRNAs and, together with other initiation factors, stimulates binding of mRNA and methionyl-tRNAi to the 40S ribosome. The eIF-3 complex specifically targets and initiates translation of a subset of mRNAs involved in cell proliferation. This is Eukaryotic translation initiation factor 3 subunit C from Scheffersomyces stipitis (strain ATCC 58785 / CBS 6054 / NBRC 10063 / NRRL Y-11545) (Yeast).